The chain runs to 131 residues: ATP synthase epsilon chain, chloroplastic (131 aa).

This sequence belongs to the ATPase epsilon chain family. As to quaternary structure, F-type ATPases have 2 components, CF(1) - the catalytic core - and CF(0) - the membrane proton channel. CF(1) has five subunits: alpha(3), beta(3), gamma(1), delta(1), epsilon(1). CF(0) has three main subunits: a, b and c.

It is found in the plastid. It localises to the chloroplast thylakoid membrane. Produces ATP from ADP in the presence of a proton gradient across the membrane. The chain is ATP synthase epsilon chain, chloroplastic from Cyanidioschyzon merolae (strain NIES-3377 / 10D) (Unicellular red alga).